The following is a 593-amino-acid chain: Methionine--tRNA ligase, mitochondrial (593 aa).

A mitochondrion-targeting transit peptide spans 1 to 29 (MLRTSVLRLLGRTGASRLSLLEDFGPRYY). Positions 52-62 (FYVNAAPHIGH) match the 'HIGH' region motif. Residues 347–351 (KMSKS) carry the 'KMSKS' region motif. Residue K350 participates in ATP binding.

This sequence belongs to the class-I aminoacyl-tRNA synthetase family.

It localises to the mitochondrion matrix. It catalyses the reaction tRNA(Met) + L-methionine + ATP = L-methionyl-tRNA(Met) + AMP + diphosphate. In Homo sapiens (Human), this protein is Methionine--tRNA ligase, mitochondrial (MARS2).